Here is a 308-residue protein sequence, read N- to C-terminus: 4-diphosphocytidyl-2-C-methyl-D-erythritol kinase (308 aa).

Residue Lys-24 is part of the active site. Residue 118–128 (PVGAGMAGGSA) participates in ATP binding. Asp-160 is an active-site residue.

This sequence belongs to the GHMP kinase family. IspE subfamily.

The catalysed reaction is 4-CDP-2-C-methyl-D-erythritol + ATP = 4-CDP-2-C-methyl-D-erythritol 2-phosphate + ADP + H(+). It participates in isoprenoid biosynthesis; isopentenyl diphosphate biosynthesis via DXP pathway; isopentenyl diphosphate from 1-deoxy-D-xylulose 5-phosphate: step 3/6. Its function is as follows. Catalyzes the phosphorylation of the position 2 hydroxy group of 4-diphosphocytidyl-2C-methyl-D-erythritol. The sequence is that of 4-diphosphocytidyl-2-C-methyl-D-erythritol kinase from Bifidobacterium adolescentis (strain ATCC 15703 / DSM 20083 / NCTC 11814 / E194a).